The primary structure comprises 228 residues: tRNA (guanine-N(1)-)-methyltransferase (228 aa).

S-adenosyl-L-methionine is bound by residues Gly-111 and Ile-130–Leu-135.

Belongs to the RNA methyltransferase TrmD family. As to quaternary structure, homodimer.

The protein resides in the cytoplasm. It catalyses the reaction guanosine(37) in tRNA + S-adenosyl-L-methionine = N(1)-methylguanosine(37) in tRNA + S-adenosyl-L-homocysteine + H(+). Its function is as follows. Specifically methylates guanosine-37 in various tRNAs. In Ureaplasma parvum serovar 3 (strain ATCC 27815 / 27 / NCTC 11736), this protein is tRNA (guanine-N(1)-)-methyltransferase.